The primary structure comprises 433 residues: DNA polymerase processivity factor (433 aa).

Positions 274–433 (RGDPFDKNYV…VPNTKKQKCG (160 aa)) are disordered. Residues 298-307 (SLSSLANAGG) show a composition bias toward low complexity. 2 stretches are compositionally biased toward gly residues: residues 325–336 (GLGGLGGGGGGG) and 344–359 (GGGG…GGGG). A compositionally biased stretch (basic and acidic residues) spans 360 to 376 (GDHDHGLSSKEKYEQHK). Residues 385–398 (GGSGGGGGGGGGGL) are compositionally biased toward gly residues.

This sequence belongs to the herpesviridae polymerase accessory protein family. In terms of assembly, forms homodimers. Interacts with host SMARCB1. Interacts with host NCL/nucleolin; this interaction is important for the organization of proteins within viral replication compartments. Interacts with UL112/UL113; this interaction is necessary for efficient viral DNA replication. Interacts with UL84. Interacts with the uracil DNA glycosylase UL114. Interacts with the DNA polymerase catalytic subunit UL54. Interacts with host IRF3. Interacts with host RELA. Post-translationally, phosphorylated by UL97 on serine residues, phosphorylation seems important for UL44 nuclear entry but does not directly affect its role in replication. Sumoylated. Sumoylation on Lys-410 increases viral DNA replication.

Its subcellular location is the virion. The protein resides in the host nucleus. Accessory subunit of the DNA polymerase that plays an essential role in viral DNA replication and acts by increasing the processivity of polymerization. Forms dimers that binds to double-stranded DNA and UL54 specifically to stimulates long chain DNA synthesis efficiently. Plays an important role in maintaining the structure of viral replication compartments by interacting with host nucleolin/NUC. In addition, suppresses innate immune responses through effects on host IRF3 and NF-kappa-B. Mechanistically, interfere with the binding of IRF3 and the p65 NF-kappa-B subunit to the promoters of antiviral genes, thereby inhibiting the expression of these genes. This chain is DNA polymerase processivity factor (UL44), found in Human cytomegalovirus (strain Merlin) (HHV-5).